We begin with the raw amino-acid sequence, 105 residues long: Large ribosomal subunit protein uL24 (105 aa).

The interval 40–61 (RIKKHTPQSANERGASSGGIVT) is disordered.

This sequence belongs to the universal ribosomal protein uL24 family. Part of the 50S ribosomal subunit.

Its function is as follows. One of two assembly initiator proteins, it binds directly to the 5'-end of the 23S rRNA, where it nucleates assembly of the 50S subunit. Functionally, one of the proteins that surrounds the polypeptide exit tunnel on the outside of the subunit. This chain is Large ribosomal subunit protein uL24, found in Mycobacteroides abscessus (strain ATCC 19977 / DSM 44196 / CCUG 20993 / CIP 104536 / JCM 13569 / NCTC 13031 / TMC 1543 / L948) (Mycobacterium abscessus).